The following is a 277-amino-acid chain: Digeranylgeranylglyceryl phosphate synthase (277 aa).

7 helical membrane passes run 16-36, 84-104, 107-127, 146-166, 200-220, 221-241, and 257-277; these read ILAGIVGILGALVAYEGIPDI, ALYYALLQYAIGSILAYFLNI, FVFATIAYFLTFLYGWKLKPL, GAIGVGRIGLAGYLAICAFLV, AIIAAIFGFLTVIASFLPVKV, GIGLGYAPIIIVDIIIIKASI, and LKIATFVAVISFLAGALTKGV.

It belongs to the UbiA prenyltransferase family. DGGGP synthase subfamily. The cofactor is Mg(2+).

Its subcellular location is the cell membrane. The catalysed reaction is sn-3-O-(geranylgeranyl)glycerol 1-phosphate + (2E,6E,10E)-geranylgeranyl diphosphate = 2,3-bis-O-(geranylgeranyl)-sn-glycerol 1-phosphate + diphosphate. It participates in membrane lipid metabolism; glycerophospholipid metabolism. Prenyltransferase that catalyzes the transfer of the geranylgeranyl moiety of geranylgeranyl diphosphate (GGPP) to the C2 hydroxyl of (S)-3-O-geranylgeranylglyceryl phosphate (GGGP). This reaction is the second ether-bond-formation step in the biosynthesis of archaeal membrane lipids. This chain is Digeranylgeranylglyceryl phosphate synthase, found in Pyrococcus furiosus (strain ATCC 43587 / DSM 3638 / JCM 8422 / Vc1).